Here is a 741-residue protein sequence, read N- to C-terminus: Alpha-1,6-mannosylglycoprotein 6-beta-N-acetylglucosaminyltransferase A (741 aa).

Over Met-1 to Lys-13 the chain is Cytoplasmic. The helical; Signal-anchor for type II membrane protein transmembrane segment at Leu-14 to Leu-30 threads the bilayer. Topologically, residues His-31 to Leu-741 are lumenal. N-linked (GlcNAc...) asparagine glycosylation is found at Asn-110, Asn-115, and Asn-118. 9 disulfides stabilise this stretch: Cys-145-Cys-183, Cys-156-Cys-196, Cys-172-Cys-338, Cys-372-Cys-626, Cys-649-Cys-724, Cys-653-Cys-726, Cys-660-Cys-713, Cys-681-Cys-702, and Cys-737-Cys-740. The tract at residues Asn-213 to Leu-741 is sufficient for catalytic activity. The tract at residues Lys-264–Lys-269 is important for activity in FGF2 release. Asn-334 carries an N-linked (GlcNAc...) asparagine glycan. Asp-378 to Ser-379 serves as a coordination point for substrate. N-linked (GlcNAc...) asparagine glycosylation is found at Asn-433 and Asn-447. A UDP-N-acetyl-alpha-D-glucosamine-binding site is contributed by Glu-526. Lys-554 lines the substrate pocket.

It belongs to the glycosyltransferase 18 family. N-glycosylated. Post-translationally, a secreted form is released from the membrane after cleavage by gamma-secretase.

The protein resides in the golgi apparatus membrane. Its subcellular location is the secreted. The enzyme catalyses N(4)-{beta-D-GlcNAc-(1-&gt;2)-[beta-D-GlcNAc-(1-&gt;4)]-alpha-D-Man-(1-&gt;3)-[beta-D-GlcNAc-(1-&gt;2)-alpha-D-Man-(1-&gt;6)]-beta-D-Man-(1-&gt;4)-beta-D-GlcNAc-(1-&gt;4)-beta-D-GlcNAc}-L-asparaginyl-[protein] + UDP-N-acetyl-alpha-D-glucosamine = N(4)-{beta-D-GlcNAc-(1-&gt;2)-[beta-D-GlcNAc-(1-&gt;4)]-alpha-D-Man-(1-&gt;3)-[beta-D-GlcNAc-(1-&gt;2)-[beta-D-GlcNAc-(1-&gt;6)]-alpha-D-Man-(1-&gt;6)]-beta-D-Man-(1-&gt;4)-beta-D-GlcNAc-(1-&gt;4)-beta-D-GlcNAc}-L-asparaginyl-[protein] + UDP + H(+). It functions in the pathway protein modification; protein glycosylation. Activity is increased by Mn(2+) and Mg(2+). In terms of biological role, catalyzes the addition of N-acetylglucosamine (GlcNAc) in beta 1-6 linkage to the alpha-linked mannose of biantennary N-linked oligosaccharides. Catalyzes an important step in the biosynthesis of branched, complex-type N-glycans, such as those found on EGFR, TGFR (TGF-beta receptor) and CDH2. Via its role in the biosynthesis of complex N-glycans, plays an important role in the activation of cellular signaling pathways, reorganization of the actin cytoskeleton, cell-cell adhesion and cell migration. MGAT5-dependent EGFR N-glycosylation enhances the interaction between EGFR and LGALS3 and thereby prevents rapid EGFR endocytosis and prolongs EGFR signaling. Required for efficient interaction between TGFB1 and its receptor. Enhances activation of intracellular signaling pathways by several types of growth factors, including FGF2, PDGF, IGF, TGFB1 and EGF. MGAT5-dependent CDH2 N-glycosylation inhibits CDH2-mediated homotypic cell-cell adhesion and contributes to the regulation of downstream signaling pathways. Promotes cell migration. Contributes to the regulation of the inflammatory response. MGAT5-dependent TCR N-glycosylation enhances the interaction between TCR and LGALS3, limits agonist-induced TCR clustering, and thereby dampens TCR-mediated responses to antigens. Required for normal leukocyte evasation and accumulation at sites of inflammation. Inhibits attachment of monocytes to the vascular endothelium and subsequent monocyte diapedesis. Functionally, promotes proliferation of umbilical vein endothelial cells and angiogenesis, at least in part by promoting the release of the growth factor FGF2 from the extracellular matrix. The chain is Alpha-1,6-mannosylglycoprotein 6-beta-N-acetylglucosaminyltransferase A (MGAT5) from Homo sapiens (Human).